Here is a 1029-residue protein sequence, read N- to C-terminus: Serine/threonine-protein kinase KSP1 (1029 aa).

The region spanning 18–351 (YQKIEDISEG…TELQNLSEYT (334 aa)) is the Protein kinase domain. Residues 27 to 35 (GSYGYVSLA) and K47 each bind ATP. Over residues 56–79 (GQYDGPQDDENDCDSSDCDDDEDT) the composition is skewed to acidic residues. A disordered region spans residues 56-105 (GQYDGPQDDENDCDSSDCDDDEDTKVDTDRHENENGNASSNNGSSREKKH). Over residues 80-89 (KVDTDRHENE) the composition is skewed to basic and acidic residues. Residues 90 to 99 (NGNASSNNGS) are compositionally biased toward low complexity. The active-site Proton acceptor is D207. Residues 377–397 (VPPSSAPVSLPTPISSSNKQH) are disordered. 2 positions are modified to phosphoserine: S416 and S419. 3 positions are modified to phosphothreonine: T501, T504, and T526. S529 carries the post-translational modification Phosphoserine. The tract at residues 532-570 (HRYMEGFSNNNNKQYRQNRNYNNNNNNSNNNHGSNYNNF) is disordered. Over residues 538-570 (FSNNNNKQYRQNRNYNNNNNNSNNNHGSNYNNF) the composition is skewed to low complexity. At S646 the chain carries Phosphoserine. The tract at residues 732-824 (STNHNNNGNN…SDSKELEQER (93 aa)) is disordered. Residues 734–743 (NHNNNGNNNH) are compositionally biased toward low complexity. Polar residues predominate over residues 744 to 754 (IDTNSTTNQYH). Residues 813–824 (HSSDSKELEQER) show a composition bias toward basic and acidic residues. Phosphoserine is present on residues S845 and S884. Residues 949-978 (EYEGESDKMAHGKMEGGDNESSSTSPDERQ) form a disordered region. The segment covering 953–964 (ESDKMAHGKMEG) has biased composition (basic and acidic residues). Position 1005 is a phosphothreonine (T1005). S1014 carries the post-translational modification Phosphoserine.

It belongs to the protein kinase superfamily. Ser/Thr protein kinase family. CK2 subfamily. Post-translationally, phosphorylated by PKA in a TORC1-dependent manner. Phosphorylation at PKA consensus sites RRxS/T decreases upon rapamycin treatment.

Its subcellular location is the nucleus. It carries out the reaction L-seryl-[protein] + ATP = O-phospho-L-seryl-[protein] + ADP + H(+). The catalysed reaction is L-threonyl-[protein] + ATP = O-phospho-L-threonyl-[protein] + ADP + H(+). Functionally, may act on PRP20. The protein is Serine/threonine-protein kinase KSP1 (KSP1) of Saccharomyces cerevisiae (strain ATCC 204508 / S288c) (Baker's yeast).